The primary structure comprises 89 residues: Small ribosomal subunit protein uS15 (89 aa).

It belongs to the universal ribosomal protein uS15 family. In terms of assembly, part of the 30S ribosomal subunit. Forms a bridge to the 50S subunit in the 70S ribosome, contacting the 23S rRNA.

Functionally, one of the primary rRNA binding proteins, it binds directly to 16S rRNA where it helps nucleate assembly of the platform of the 30S subunit by binding and bridging several RNA helices of the 16S rRNA. Its function is as follows. Forms an intersubunit bridge (bridge B4) with the 23S rRNA of the 50S subunit in the ribosome. The protein is Small ribosomal subunit protein uS15 of Trichormus variabilis (strain ATCC 29413 / PCC 7937) (Anabaena variabilis).